The following is an 87-amino-acid chain: Protein anon-73B1 (87 aa).

A helical transmembrane segment spans residues 25–47 (LLIRYGLYVGALFQFVCISAAVL). The tract at residues 51 to 87 (NPDGQSNPESGEVTEREGEPVRTRLHKIRKLEKKKRR) is disordered. A compositionally biased stretch (basic and acidic residues) spans 63–72 (VTEREGEPVR). Residues 73–87 (TRLHKIRKLEKKKRR) are compositionally biased toward basic residues.

It belongs to the UPF0239 family.

The protein localises to the membrane. In Drosophila melanogaster (Fruit fly), this protein is Protein anon-73B1 (anon-73B1).